Reading from the N-terminus, the 89-residue chain is Large ribosomal subunit protein eL37A (89 aa).

Cysteine 19, cysteine 22, cysteine 34, and cysteine 37 together coordinate Zn(2+). The C4-type zinc finger occupies 19 to 37 (CRRCGKRSFHIQKSTCACC).

It belongs to the eukaryotic ribosomal protein eL37 family. Component of the large ribosomal subunit (LSU). Mature yeast ribosomes consist of a small (40S) and a large (60S) subunit. The 40S small subunit contains 1 molecule of ribosomal RNA (18S rRNA) and at least 33 different proteins. The large 60S subunit contains 3 rRNA molecules (25S, 5.8S and 5S rRNA) and at least 46 different proteins. Zn(2+) serves as cofactor.

Its subcellular location is the cytoplasm. Component of the ribosome, a large ribonucleoprotein complex responsible for the synthesis of proteins in the cell. The small ribosomal subunit (SSU) binds messenger RNAs (mRNAs) and translates the encoded message by selecting cognate aminoacyl-transfer RNA (tRNA) molecules. The large subunit (LSU) contains the ribosomal catalytic site termed the peptidyl transferase center (PTC), which catalyzes the formation of peptide bonds, thereby polymerizing the amino acids delivered by tRNAs into a polypeptide chain. The nascent polypeptides leave the ribosome through a tunnel in the LSU and interact with protein factors that function in enzymatic processing, targeting, and the membrane insertion of nascent chains at the exit of the ribosomal tunnel. This Schizosaccharomyces pombe (strain 972 / ATCC 24843) (Fission yeast) protein is Large ribosomal subunit protein eL37A (rpl3703).